The chain runs to 24 residues: Large ribosomal subunit protein uL30 (24 aa).

The protein belongs to the universal ribosomal protein uL30 family. In terms of assembly, part of the 50S ribosomal subunit.

This is Large ribosomal subunit protein uL30 (rpmD) from Ectopseudomonas mendocina (Pseudomonas mendocina).